A 393-amino-acid chain; its full sequence is Ceramide synthase 4 (393 aa).

At 1–31 (MSFSLSEWLWQETYWLPPNVTWAELEDRDGL) the chain is on the lumenal side. Asparagine 19 is a glycosylation site (N-linked (GlcNAc...) asparagine). The helical transmembrane segment at 32 to 52 (VFAHPHHVLAAFPVALVLVAV) threads the bilayer. A homeobox-like region spans residues 67 to 128 (WMGVQDPIRR…RRRRNQDRPS (62 aa)). The 202-residue stretch at 131–332 (KKFCEACWRF…ILRMLYSFLH (202 aa)) folds into the TLC domain. 4 helical membrane-spanning segments follow: residues 140–160 (FVFYLCSFVGGTSILYHESWL), 179–199 (LYWWYLLELGFYLSLLITLPF), 217–237 (VGLIGFSYSVNLLRIGAVVLL), and 265–285 (FIMFALVFFYTRLIFFPTQVI). A Last loop motif motif is present at residues 291-301 (DSIKNSGPFFG). Residues 304-324 (FFIVLLVMLQILHVYWFCLIL) form a helical membrane-spanning segment. The Cytoplasmic portion of the chain corresponds to 325-393 (RMLYSFLHKG…CLTNGHTRAT (69 aa)). Positions 341–393 (RSDVEEPDSSDDEPVSEGPQLKNGMARGSRVAVTNGPRSRAAACLTNGHTRAT) are disordered. A phosphoserine mark is found at serine 342, serine 349, and serine 350. Over residues 345–355 (EEPDSSDDEPV) the composition is skewed to acidic residues.

In terms of processing, phosphorylated at the C-terminus by CK2. Ubiquitously expressed, with highest levels in skin.

It is found in the endoplasmic reticulum membrane. The enzyme catalyses sphinganine + octadecanoyl-CoA = N-(octadecanoyl)-sphinganine + CoA + H(+). It catalyses the reaction eicosanoyl-CoA + sphinganine = N-eicosanoylsphinganine + CoA + H(+). The catalysed reaction is docosanoyl-CoA + sphinganine = N-docosanoylsphinganine + CoA + H(+). It carries out the reaction tetracosanoyl-CoA + sphinganine = N-tetracosanoylsphinganine + CoA + H(+). The enzyme catalyses hexacosanoyl-CoA + sphinganine = N-hexacosanoylsphinganine + CoA + H(+). It catalyses the reaction a fatty acyl-CoA + sphing-4-enine = an N-acylsphing-4-enine + CoA + H(+). The catalysed reaction is sphing-4-enine + octadecanoyl-CoA = N-octadecanoylsphing-4-enine + CoA + H(+). It carries out the reaction hexadecasphinganine + octadecanoyl-CoA = N-octadecanoylhexadecasphinganine + CoA + H(+). It functions in the pathway lipid metabolism; sphingolipid metabolism. Ceramide synthase that catalyzes formation of ceramide from sphinganine and acyl-CoA substrates, with high selectivity toward long and very-long chains (C18:0-C22:0) as acyl donor. This chain is Ceramide synthase 4, found in Mus musculus (Mouse).